The following is an 875-amino-acid chain: Serine/threonine-protein kinase ATG1 (875 aa).

The 297-residue stretch at 22–318 folds into the Protein kinase domain; that stretch reads YSIGPEIGKG…FNEFFNDPLI (297 aa). ATP is bound by residues 28–36 and lysine 51; that span reads IGKGSFATV. Catalysis depends on aspartate 168, which acts as the Proton acceptor. The span at 367-379 shows a compositional bias: basic and acidic residues; that stretch reads EKSKQDLPAREVS. Disordered regions lie at residues 367–422 and 470–515; these read EKSK…QPHN and INPR…DRRI. A compositionally biased stretch (polar residues) spans 380–389; sequence THASESQTKA. The segment covering 390 to 405 has biased composition (basic and acidic residues); sequence VDTRPSSRDEEIKEII. 3 stretches are compositionally biased toward polar residues: residues 406 to 420, 473 to 490, and 497 to 508; these read NKNS…SIQP, RRTS…NNMQ, and LRSNSSGSQRRP.

It belongs to the protein kinase superfamily. Ser/Thr protein kinase family. APG1/unc-51/ULK1 subfamily. In terms of assembly, homodimer. Forms a ternary complex with ATG13 and ATG17.

Its subcellular location is the cytoplasm. The protein localises to the preautophagosomal structure membrane. It catalyses the reaction L-seryl-[protein] + ATP = O-phospho-L-seryl-[protein] + ADP + H(+). The enzyme catalyses L-threonyl-[protein] + ATP = O-phospho-L-threonyl-[protein] + ADP + H(+). In terms of biological role, serine/threonine protein kinase involved in the cytoplasm to vacuole transport (Cvt) and found to be essential in autophagy, where it is required for the formation of autophagosomes. Involved in the clearance of protein aggregates which cannot be efficiently cleared by the proteasome. Required for selective autophagic degradation of the nucleus (nucleophagy) as well as for mitophagy which contributes to regulate mitochondrial quantity and quality by eliminating the mitochondria to a basal level to fulfill cellular energy requirements and preventing excess ROS production. Also involved in endoplasmic reticulum-specific autophagic process, in selective removal of ER-associated degradation (ERAD) substrates. Plays a key role in ATG9 and ATG23 cycling through the pre-autophagosomal structure and is necessary to promote ATG18 binding to ATG9 through phosphorylation of ATG9. Catalyzes phosphorylation of ATG4, decreasing the interaction between ATG4 and ATG8 and impairing deconjugation of PE-conjugated forms of ATG8. In Debaryomyces hansenii (strain ATCC 36239 / CBS 767 / BCRC 21394 / JCM 1990 / NBRC 0083 / IGC 2968) (Yeast), this protein is Serine/threonine-protein kinase ATG1.